The primary structure comprises 675 residues: Zinc finger CCCH domain-containing protein 65 (675 aa).

Positions 294 to 320 are disordered; the sequence is TFSNEAKMDPGTSIKKRSAPSKDAKAR. The span at 307-320 shows a compositional bias: basic residues; it reads IKKRSAPSKDAKAR. A coiled-coil region spans residues 314–342; that stretch reads SKDAKARKRAKARIKRAQERIALGVKKLK. 3 consecutive C3H1-type zinc fingers follow at residues 350–377, 384–406, and 409–432; these read PKPI…HDTI, PCCY…HDLS, and PCNN…HKGT. 2 disordered regions span residues 487–572 and 586–612; these read LKPS…LPLG and EQKT…SHIQ. Residues 490–504 show a composition bias toward low complexity; that stretch reads SSHSNQRNSSDASSS. Over residues 543-567 the composition is skewed to polar residues; that stretch reads KASSASKPNTDNSDSQTLKQSQQGS. The span at 586–595 shows a compositional bias: basic and acidic residues; it reads EQKTLNREPQ. Residues 597–612 show a composition bias toward polar residues; sequence PASSKNLKTTPSSHIQ.

Its function is as follows. Possesses RNA-binding and ribonuclease activities in vitro. In Arabidopsis thaliana (Mouse-ear cress), this protein is Zinc finger CCCH domain-containing protein 65 (EMB1789).